A 101-amino-acid chain; its full sequence is MAKQSMKAREAKRAKLVAKFAEKRASLKAIISDVNVSEEDRWNAVLKLQTLPRDSSASRQRNRCNQTGRPHGYLRKFGLSRIKVREACMKGEIPGLRKASW.

The protein belongs to the universal ribosomal protein uS14 family. Part of the 30S ribosomal subunit. Contacts proteins S3 and S10.

Its function is as follows. Binds 16S rRNA, required for the assembly of 30S particles and may also be responsible for determining the conformation of the 16S rRNA at the A site. The sequence is that of Small ribosomal subunit protein uS14 from Vibrio vulnificus (strain CMCP6).